The primary structure comprises 476 residues: Cysteine--tRNA ligase (476 aa).

Cys-27 lines the Zn(2+) pocket. A 'HIGH' region motif is present at residues 29–39 (ITPYDSVHVGH). Zn(2+) contacts are provided by Cys-213, His-238, and Glu-242. A 'KMSKS' region motif is present at residues 271–275 (KMSKS). Position 274 (Lys-274) interacts with ATP.

It belongs to the class-I aminoacyl-tRNA synthetase family. Requires Zn(2+) as cofactor.

The protein localises to the cytoplasm. The catalysed reaction is tRNA(Cys) + L-cysteine + ATP = L-cysteinyl-tRNA(Cys) + AMP + diphosphate. This chain is Cysteine--tRNA ligase, found in Pyrobaculum arsenaticum (strain DSM 13514 / JCM 11321 / PZ6).